A 551-amino-acid chain; its full sequence is L-lactate permease (551 aa).

Helical transmembrane passes span 13–33 (NIWL…FALI), 37–57 (LKGY…ALLF), 69–89 (VVYG…AAVF), 131–151 (GAAG…GLGF), 159–179 (LCLI…PILV), 194–214 (MVGR…MAIM), 220–240 (IKET…AQYL), 244–264 (FIGP…CLTL), 366–386 (FDWF…SIVW), 405–425 (LALP…SNYS), 438–458 (TGHA…FLTG), 494–514 (VTGK…VGLV), and 530–550 (IFTC…TWMI).

This sequence belongs to the lactate permease family.

Its subcellular location is the cell inner membrane. The catalysed reaction is (S)-lactate(in) + H(+)(in) = (S)-lactate(out) + H(+)(out). It carries out the reaction (R)-lactate(in) + H(+)(in) = (R)-lactate(out) + H(+)(out). It catalyses the reaction glycolate(in) + H(+)(in) = glycolate(out) + H(+)(out). Its activity is regulated as follows. Inhibited by the proton ionophore carbonyl cyanide m-chlorophenylhydrazone (CCCP). Its function is as follows. Uptake of L-lactate across the membrane. Can also transport D-lactate and glycolate. Seems to be driven by a proton motive force. In Escherichia coli (strain K12), this protein is L-lactate permease.